The primary structure comprises 141 residues: Large ribosomal subunit protein uL16 (141 aa).

Residues 1 to 16 (MLMPRKPPKGFRKPHH) show a composition bias toward basic residues. The segment at 1 to 27 (MLMPRKPPKGFRKPHHPDRSGASKGGN) is disordered.

Belongs to the universal ribosomal protein uL16 family. As to quaternary structure, part of the 50S ribosomal subunit.

Binds 23S rRNA and is also seen to make contacts with the A and possibly P site tRNAs. The chain is Large ribosomal subunit protein uL16 from Salinispora arenicola (strain CNS-205).